Consider the following 344-residue polypeptide: Glycerol-3-phosphate dehydrogenase [NAD(P)+] (344 aa).

NADPH contacts are provided by S11, W12, H32, R33, and K106. K106, G136, and S138 together coordinate sn-glycerol 3-phosphate. A140 is a binding site for NADPH. Residues K192, D245, S255, R256, and N257 each contribute to the sn-glycerol 3-phosphate site. The Proton acceptor role is filled by K192. R256 is a binding site for NADPH. Positions 280 and 282 each coordinate NADPH.

This sequence belongs to the NAD-dependent glycerol-3-phosphate dehydrogenase family.

The protein localises to the cytoplasm. The catalysed reaction is sn-glycerol 3-phosphate + NAD(+) = dihydroxyacetone phosphate + NADH + H(+). It catalyses the reaction sn-glycerol 3-phosphate + NADP(+) = dihydroxyacetone phosphate + NADPH + H(+). It participates in membrane lipid metabolism; glycerophospholipid metabolism. Its function is as follows. Catalyzes the reduction of the glycolytic intermediate dihydroxyacetone phosphate (DHAP) to sn-glycerol 3-phosphate (G3P), the key precursor for phospholipid synthesis. The polypeptide is Glycerol-3-phosphate dehydrogenase [NAD(P)+] (Geobacillus kaustophilus (strain HTA426)).